Consider the following 200-residue polypeptide: Small ribosomal subunit protein uS4 (200 aa).

The S4 RNA-binding domain occupies 94-157 (SRLDNLVFRA…QTSPQVKDAV (64 aa)).

It belongs to the universal ribosomal protein uS4 family. In terms of assembly, part of the 30S ribosomal subunit. Contacts protein S5. The interaction surface between S4 and S5 is involved in control of translational fidelity.

In terms of biological role, one of the primary rRNA binding proteins, it binds directly to 16S rRNA where it nucleates assembly of the body of the 30S subunit. Functionally, with S5 and S12 plays an important role in translational accuracy. The protein is Small ribosomal subunit protein uS4 of Metamycoplasma arthritidis (strain 158L3-1) (Mycoplasma arthritidis).